Reading from the N-terminus, the 141-residue chain is Relaxin-3 (141 aa).

Residues 1–24 (MAMLGLLLLASWALLGALGLQAEA) form the signal peptide. 3 disulfides stabilise this stretch: Cys-34–Cys-128, Cys-46–Cys-141, and Cys-127–Cys-132. Residues 54 to 117 (ADILAHESLG…GSPGVVRGSR (64 aa)) constitute a propeptide, connecting peptide.

The protein belongs to the insulin family. Heterodimer of a B chain and an A chain linked by two disulfide bonds. In terms of tissue distribution, high expression in the brain localized to the pons/medulla with highest levels in pars ventromedialis of the dorsal tegmental nucleus. Significant expression is also detected in the spleen, thymus, lung, testis and ovary.

The protein resides in the secreted. May play a role in neuropeptide signaling processes. Ligand for LGR7, relaxin-3 receptor-1 and relaxin-3 receptor-2. This is Relaxin-3 (Rln3) from Mus musculus (Mouse).